Here is a 428-residue protein sequence, read N- to C-terminus: Gamma-glutamyl phosphate reductase (428 aa).

This sequence belongs to the gamma-glutamyl phosphate reductase family.

Its subcellular location is the cytoplasm. It catalyses the reaction L-glutamate 5-semialdehyde + phosphate + NADP(+) = L-glutamyl 5-phosphate + NADPH + H(+). It functions in the pathway amino-acid biosynthesis; L-proline biosynthesis; L-glutamate 5-semialdehyde from L-glutamate: step 2/2. Catalyzes the NADPH-dependent reduction of L-glutamate 5-phosphate into L-glutamate 5-semialdehyde and phosphate. The product spontaneously undergoes cyclization to form 1-pyrroline-5-carboxylate. The chain is Gamma-glutamyl phosphate reductase from Hyphomonas neptunium (strain ATCC 15444).